The following is a 616-amino-acid chain: 2-[(L-alanin-3-ylcarbamoyl)methyl]-3-(2-aminoethylcarbamoyl)-2-hydroxypropanoate synthase (616 aa).

This sequence belongs to the IucA/IucC family. In terms of assembly, forms a mixture of monomer and dimer in solution.

The catalysed reaction is 2-[(2-aminoethylcarbamoyl)methyl]-2-hydroxybutanedioate + (S)-2,3-diaminopropanoate + ATP = 2-[(L-alanin-3-ylcarbamoyl)methyl]-3-(2-aminoethylcarbamoyl)-2-hydroxypropanoate + AMP + diphosphate. The protein operates within siderophore biosynthesis. In terms of biological role, catalyzes the condensation of L-2,3-diaminopropionic acid (L-Dap) and citryl-diaminoethane to form L-2,3-diaminopropionyl-citryl-diaminoethane, the third step in staphyloferrin B biosynthesis. The chain is 2-[(L-alanin-3-ylcarbamoyl)methyl]-3-(2-aminoethylcarbamoyl)-2-hydroxypropanoate synthase from Staphylococcus aureus (strain NCTC 8325 / PS 47).